The sequence spans 466 residues: Argininosuccinate lyase (466 aa).

It belongs to the lyase 1 family. Argininosuccinate lyase subfamily.

It localises to the cytoplasm. It carries out the reaction 2-(N(omega)-L-arginino)succinate = fumarate + L-arginine. It functions in the pathway amino-acid biosynthesis; L-arginine biosynthesis; L-arginine from L-ornithine and carbamoyl phosphate: step 3/3. The chain is Argininosuccinate lyase from Synechococcus sp. (strain ATCC 27144 / PCC 6301 / SAUG 1402/1) (Anacystis nidulans).